A 1377-amino-acid chain; its full sequence is Protein RhsA (1377 aa).

Repeat copies occupy residues 330–352, 353–374, 375–417, 418–438, 439–460, 461–481, 482–502, 503–525, 526–546, 547–567, 568–588, 589–609, 610–629, 630–650, 651–671, 672–691, 692–711, 712–734, 735–758, 808–828, 829–850, 851–871, 872–894, 895–930, 931–959, 960–984, 985–1019, and 1162–1186. Positions 330–1186 are 28 X approximate tandem repeats; that stretch reads GKQVRSFTYD…LNEENPHQLQ (857 aa). A disordered region spans residues 1356–1377; that stretch reads DAKSTQKAWNCRHSRQSNDKKR.

The protein belongs to the RHS family.

Rhs elements have a nonessential function. They may play an important role in the natural ecology of the cell. The sequence is that of Protein RhsA (rhsA) from Escherichia coli (strain K12).